The following is a 170-amino-acid chain: Small ribosomal subunit protein uS3mB (170 aa).

The transit peptide at 1–30 directs the protein to the mitochondrion; that stretch reads MAAPVMSAFGRLQGLIRTERSLLTHVQSRC.

Belongs to the universal ribosomal protein uS3 family. As to quaternary structure, component of the mitochondrial ribosome small subunit (28S) which comprises a 12S rRNA and about 30 distinct proteins.

Its subcellular location is the mitochondrion. This chain is Small ribosomal subunit protein uS3mB (mrps24-b), found in Xenopus laevis (African clawed frog).